Reading from the N-terminus, the 187-residue chain is Serine/arginine-rich splicing factor RSZ21 (187 aa).

One can recognise an RRM domain in the interval 2 to 73; that stretch reads TRVYVGNLDP…WRVELSHKDK (72 aa). Disordered stretches follow at residues 68–89 and 105–187; these read LSHK…IEDS and RRGR…ANGV. The CCHC-type zinc finger occupies 89-106; it reads SKCYECGELGHFARECRR. The segment covering 107–122 has biased composition (basic residues); sequence GRGSVRRRSPSPRRRR. 6 positions are modified to phosphoserine: S123, S132, S134, S140, S146, and S159. Over residues 136-155 the composition is skewed to basic residues; it reads RGRRSPPRRRSVTPPRRGRS. A compositionally biased stretch (basic and acidic residues) spans 165-177; the sequence is SRRDSPRRRDSPY. Positions 178-187 are enriched in low complexity; it reads GRRSPYANGV. S181 is modified (phosphoserine).

The protein belongs to the splicing factor SR family. RSZ subfamily. As to quaternary structure, component of the spliceosome. Interacts with SNRNP35, AFC2, CYP59, RS2Z33 and RNU1. Interacts with MOS14. In terms of processing, extensively phosphorylated on serine residues in the RS domain. Phosphorylated by AFC2. Expressed in roots, leaves, flowers and siliques.

Its subcellular location is the nucleus speckle. Functionally, probably involved in intron recognition and spliceosome assembly. The polypeptide is Serine/arginine-rich splicing factor RSZ21 (RSZ21) (Arabidopsis thaliana (Mouse-ear cress)).